The sequence spans 649 residues: Archaeal Lon protease (649 aa).

Residues 1 to 114 (MFSIKFKTTE…KLDFKAPSST (114 aa)) lie on the Cytoplasmic side of the membrane. 47–54 (GDPGVGKS) lines the ATP pocket. A helical membrane pass occupies residues 115 to 135 (TLLLIMIGAILLSEYLLKYLP). Residues 136-138 (QNY) lie on the Extracellular side of the membrane. Residues 139–159 (LLAAVTITALIVLIFGFVIIL) traverse the membrane as a helical segment. The Cytoplasmic portion of the chain corresponds to 160 to 649 (TSIMGASRAS…DNRGGAERFN (490 aa)). The Lon proteolytic domain maps to 456-639 (EPKVGVIYGL…DEIVPLVFDL (184 aa)). Catalysis depends on residues serine 550 and lysine 593.

It belongs to the peptidase S16 family. Archaeal LonB subfamily. Homohexamer. Organized in a ring with a central cavity.

The protein resides in the cell membrane. ATP-dependent serine protease that mediates the selective degradation of mutant and abnormal proteins as well as certain short-lived regulatory proteins. Degrades polypeptides processively. This chain is Archaeal Lon protease, found in Methanocaldococcus jannaschii (strain ATCC 43067 / DSM 2661 / JAL-1 / JCM 10045 / NBRC 100440) (Methanococcus jannaschii).